A 214-amino-acid polypeptide reads, in one-letter code: Nodulation protein A (214 aa).

Belongs to the NodA family.

The protein resides in the cytoplasm. Its function is as follows. N-acyltransferase required for nodulation. Acts in the production of a small, heat-stable compound (Nod) that stimulates mitosis in various plant protoplasts. The protein is Nodulation protein A of Methylobacterium nodulans (strain LMG 21967 / CNCM I-2342 / ORS 2060).